The chain runs to 185 residues: Protein LURP-one-related 13 (185 aa).

Belongs to the LOR family.

Might be related to the phospholipid scramblase and tubby-like superfamily of membrane tethered transcription factors. The sequence is that of Protein LURP-one-related 13 from Arabidopsis thaliana (Mouse-ear cress).